We begin with the raw amino-acid sequence, 336 residues long: UPF0324 membrane protein lp_2841 (336 aa).

Transmembrane regions (helical) follow at residues 5–22 (GILP…ISQG), 26–48 (FVPA…NTFL), 84–106 (IGGF…ALWL), 116–138 (VRML…IAPV), 150–172 (ITLV…MAVF), 204–226 (TVQF…VLIF), 255–277 (WYVA…AIIG), 282–304 (TISS…LVNF), and 311–333 (LALY…ITLL).

This sequence belongs to the UPF0324 family.

Its subcellular location is the cell membrane. This chain is UPF0324 membrane protein lp_2841, found in Lactiplantibacillus plantarum (strain ATCC BAA-793 / NCIMB 8826 / WCFS1) (Lactobacillus plantarum).